Here is a 363-residue protein sequence, read N- to C-terminus: Probable methyltransferase-like protein 24 (363 aa).

The signal sequence occupies residues 1–38 (MGTAKPPGRGCGALPRWLLGAALLLGLRLCMELRHAGS). The segment at 37 to 62 (GSGPPGRRDLRGPPRTHLLPAPGPLR) is disordered.

The protein belongs to the methyltransferase superfamily.

It is found in the secreted. In terms of biological role, probable methyltransferase. In Rattus norvegicus (Rat), this protein is Probable methyltransferase-like protein 24 (Mettl24).